The following is a 138-amino-acid chain: Putative transcriptional regulatory protein NedR (138 aa).

Residues 1–25 (MCWGRSWTFGRSSSKGWRPTSSASS) are disordered. The segment covering 9-25 (FGRSSSKGWRPTSSASS) has biased composition (polar residues).

In terms of biological role, may serve as a transcriptional regulator. This is Putative transcriptional regulatory protein NedR (nedR) from Micromonospora viridifaciens.